Consider the following 1690-residue polypeptide: Trinucleotide repeat-containing gene 6C protein (1690 aa).

3 stretches are compositionally biased toward polar residues: residues Met1–Ser12, Gly19–Ala36, and Ala160–Gly183. Disordered regions lie at residues Met1–Thr42, Glu158–Thr202, Pro226–Val848, and Cys863–Lys928. A sufficient for interaction with argonaute family proteins region spans residues Met1 to Lys921. The segment covering Pro184–Asn198 has biased composition (low complexity). Residues Asn255 to Val288 are compositionally biased toward polar residues. Position 313 is an omega-N-methylarginine (Arg313). The segment covering Gly362–Ala374 has biased composition (polar residues). Low complexity predominate over residues Ser384–Gly404. Over residues Gly415 to Val426 the composition is skewed to basic and acidic residues. A compositionally biased stretch (polar residues) spans Leu444–Ala459. A compositionally biased stretch (basic and acidic residues) spans Glu464–Asn474. Ser465 is subject to Phosphoserine. Composition is skewed to polar residues over residues Ile482–Val510, Ala519–Ala530, Ser540–Ala551, Gly644–Gly656, and Pro663–Asn678. At Ser714 the chain carries Phosphoserine. Residues Ser754 to Thr771 show a composition bias toward low complexity. Thr776 bears the Phosphothreonine mark. Residues Pro778–Arg788 are compositionally biased toward polar residues. The span at Ser901–Ser915 shows a compositional bias: low complexity. One can recognise a UBA domain in the interval Lys928–Lys973. Ser1006 carries the post-translational modification Phosphoserine. Positions Gln1156–Gln1214 form a coiled coil. Disordered regions lie at residues Val1212–Lys1337, Gln1351–Gly1380, Gly1397–Asn1421, Ile1441–Thr1486, and Pro1600–Leu1625. The span at Gln1214–His1223 shows a compositional bias: pro residues. Positions Asn1260–Ile1690 are silencing domain; interaction with CNOT1 and PAN3. A compositionally biased stretch (polar residues) spans Pro1272–Ser1321. The interval Lys1371–Gly1417 is required for interaction with PABPC1. The interval Lys1371–Ile1690 is sufficient for translational repression when tethered to a target mRNA. A PABPC1-interacting motif-2 (PAM2) region spans residues Ser1381–Gln1399. A compositionally biased stretch (polar residues) spans Ile1441–Leu1457. The RRM domain occupies Ala1565–His1632. The interaction with the CCR4-NOT complex stretch occupies residues Gly1596 to Ile1690. Low complexity predominate over residues Ser1603–Gln1613.

The protein belongs to the GW182 family. In terms of assembly, interacts with one or more of the argonaute family proteins AGO1, AGO2, AGO3 and AGO4. Interacts with CNOT1; the interaction mediates the association with the CCR4-NOT complex. Interacts with PAN3; the interaction mediates the association with the PAN complex.

In terms of biological role, plays a role in RNA-mediated gene silencing by micro-RNAs (miRNAs). Required for miRNA-dependent translational repression of complementary mRNAs by argonaute family proteins As scaffoldng protein associates with argonaute proteins bound to partially complementary mRNAs and simultaneously can recruit CCR4-NOT and PAN deadenylase complexes. The sequence is that of Trinucleotide repeat-containing gene 6C protein (Tnrc6c) from Mus musculus (Mouse).